A 331-amino-acid chain; its full sequence is Phosphoenolpyruvate transferase (331 aa).

Asp63 provides a ligand contact to 7,8-didemethyl-8-hydroxy-5-deazariboflavin.

It belongs to the CofD family. In terms of assembly, homodimer. The cofactor is Mg(2+).

It carries out the reaction enolpyruvoyl-2-diphospho-5'-guanosine + 7,8-didemethyl-8-hydroxy-5-deazariboflavin = dehydro coenzyme F420-0 + GMP + H(+). It participates in cofactor biosynthesis; coenzyme F420 biosynthesis. Catalyzes the transfer of the phosphoenolpyruvate moiety from enoylpyruvoyl-2-diphospho-5'-guanosine (EPPG) to 7,8-didemethyl-8-hydroxy-5-deazariboflavin (FO) with the formation of dehydro coenzyme F420-0 and GMP. The chain is Phosphoenolpyruvate transferase from Mycobacterium sp. (strain JLS).